Reading from the N-terminus, the 461-residue chain is Cysteine--tRNA ligase (461 aa).

C28 provides a ligand contact to Zn(2+). The 'HIGH' region motif lies at 30-40 (ITIYDLCHIGH). The Zn(2+) site is built by C209, H234, and E238. Residues 266-270 (KMSKS) carry the 'KMSKS' region motif. Residue K269 coordinates ATP.

This sequence belongs to the class-I aminoacyl-tRNA synthetase family. As to quaternary structure, monomer. Zn(2+) is required as a cofactor.

It is found in the cytoplasm. It carries out the reaction tRNA(Cys) + L-cysteine + ATP = L-cysteinyl-tRNA(Cys) + AMP + diphosphate. The protein is Cysteine--tRNA ligase of Yersinia pestis bv. Antiqua (strain Antiqua).